The following is a 374-amino-acid chain: Homoserine O-succinyltransferase (374 aa).

The AB hydrolase-1 domain maps to 47 to 357 (NAILVCHALS…NFGHDSFLME (311 aa)). Serine 153 (nucleophile) is an active-site residue. Residue arginine 223 coordinates substrate. Catalysis depends on residues aspartate 318 and histidine 351. Aspartate 352 lines the substrate pocket.

It belongs to the AB hydrolase superfamily. MetX family. In terms of assembly, homodimer.

The protein resides in the cytoplasm. It catalyses the reaction L-homoserine + succinyl-CoA = O-succinyl-L-homoserine + CoA. It functions in the pathway amino-acid biosynthesis; L-methionine biosynthesis via de novo pathway; O-succinyl-L-homoserine from L-homoserine: step 1/1. Its function is as follows. Transfers a succinyl group from succinyl-CoA to L-homoserine, forming succinyl-L-homoserine. The polypeptide is Homoserine O-succinyltransferase (Dechloromonas aromatica (strain RCB)).